We begin with the raw amino-acid sequence, 152 residues long: MRTYNISPLWRSTIGFDRVFDLVDAARHTAGEANYPPCNVERLSDDRYRISLALAGFSPDEITVTAEQSVLTIEGRKGEKGRRDFVYRGISSRPFKRQFGLAAHVRVEGARFDNGLLQIELVREIPDAMKPRRIPIDNLAASDVQQIEREAA.

The sHSP domain maps to 29-139 (TAGEANYPPC…KPRRIPIDNL (111 aa)).

The protein belongs to the small heat shock protein (HSP20) family.

This chain is Small heat shock protein HspA (hspA), found in Bradyrhizobium diazoefficiens (strain JCM 10833 / BCRC 13528 / IAM 13628 / NBRC 14792 / USDA 110).